The sequence spans 224 residues: Biosynthetic peptidoglycan transglycosylase (224 aa).

Residues 12-32 traverse the membrane as a helical segment; the sequence is ILVVLAILPVFLLLVYSLPFV.

It belongs to the glycosyltransferase 51 family.

Its subcellular location is the cell inner membrane. It catalyses the reaction [GlcNAc-(1-&gt;4)-Mur2Ac(oyl-L-Ala-gamma-D-Glu-L-Lys-D-Ala-D-Ala)](n)-di-trans,octa-cis-undecaprenyl diphosphate + beta-D-GlcNAc-(1-&gt;4)-Mur2Ac(oyl-L-Ala-gamma-D-Glu-L-Lys-D-Ala-D-Ala)-di-trans,octa-cis-undecaprenyl diphosphate = [GlcNAc-(1-&gt;4)-Mur2Ac(oyl-L-Ala-gamma-D-Glu-L-Lys-D-Ala-D-Ala)](n+1)-di-trans,octa-cis-undecaprenyl diphosphate + di-trans,octa-cis-undecaprenyl diphosphate + H(+). It participates in cell wall biogenesis; peptidoglycan biosynthesis. In terms of biological role, peptidoglycan polymerase that catalyzes glycan chain elongation from lipid-linked precursors. The sequence is that of Biosynthetic peptidoglycan transglycosylase from Brucella suis biovar 1 (strain 1330).